The sequence spans 239 residues: MAKPCGVRLSGEALKQVDVFRQNLFQEAEEFLYRFLPQKIIYLNQLLQEDSFNVTDLNSLRAPLDIPIPDPPPKDDEMETDKQEKKEVPKCGFLPGNEKVLALLALVKPEVWTLKEKCILVITWIQHLIPKIEDGNDFGVAIQEKVLERVNAVKTKVEAFQTTISKYFSERGDAVAKASKETHVMDYRALVHERDEAVYGDLRAMVLDLRAFYAELYHIISSNLEKIVNPKGEEKPSMY.

An N-acetylalanine modification is found at Ala-2. A Phosphoserine modification is found at Ser-10. The segment at 65–86 (DIPIPDPPPKDDEMETDKQEKK) is disordered. Over residues 72–86 (PPKDDEMETDKQEKK) the composition is skewed to basic and acidic residues.

The protein belongs to the PA28 family. In terms of assembly, heterodimer of PSME1 and PSME2, which forms a hexameric ring.

In terms of biological role, implicated in immunoproteasome assembly and required for efficient antigen processing. The PA28 activator complex enhances the generation of class I binding peptides by altering the cleavage pattern of the proteasome. This is Proteasome activator complex subunit 2 (PSME2) from Bos taurus (Bovine).